A 322-amino-acid polypeptide reads, in one-letter code: Large ribosomal subunit protein uL29m (322 aa).

Positions 1-44 (MLNVQRGLHTTVRLSARTKYTKPKPKPQARVIKSEPSQVTHHDN) are disordered.

It belongs to the universal ribosomal protein uL29 family. In terms of assembly, component of the mitochondrial large ribosomal subunit. Mature mitochondrial ribosomes consist of a small (37S) and a large (54S) subunit. The 37S subunit contains at least 33 different proteins and 1 molecule of RNA (15S). The 54S subunit contains at least 45 different proteins and 1 molecule of RNA (21S).

The protein resides in the mitochondrion. The sequence is that of Large ribosomal subunit protein uL29m (MRPL4) from Vanderwaltozyma polyspora (strain ATCC 22028 / DSM 70294 / BCRC 21397 / CBS 2163 / NBRC 10782 / NRRL Y-8283 / UCD 57-17) (Kluyveromyces polysporus).